The primary structure comprises 205 residues: Holliday junction branch migration complex subunit RuvA (205 aa).

Residues 1-64 (MIGKLKGSIE…EDQLKLFGFV (64 aa)) are domain I. The interval 65-143 (SALEREWFNL…AFAGDASASI (79 aa)) is domain II. The flexible linker stretch occupies residues 144 to 153 (GLKQELGEGV). A domain III region spans residues 153–205 (VASAPVADAVSALTNLGYSRDQAANAVAAALKNGGEGGDSAKLIRLGLKELSR).

This sequence belongs to the RuvA family. As to quaternary structure, homotetramer. Forms an RuvA(8)-RuvB(12)-Holliday junction (HJ) complex. HJ DNA is sandwiched between 2 RuvA tetramers; dsDNA enters through RuvA and exits via RuvB. An RuvB hexamer assembles on each DNA strand where it exits the tetramer. Each RuvB hexamer is contacted by two RuvA subunits (via domain III) on 2 adjacent RuvB subunits; this complex drives branch migration. In the full resolvosome a probable DNA-RuvA(4)-RuvB(12)-RuvC(2) complex forms which resolves the HJ.

The protein resides in the cytoplasm. Its function is as follows. The RuvA-RuvB-RuvC complex processes Holliday junction (HJ) DNA during genetic recombination and DNA repair, while the RuvA-RuvB complex plays an important role in the rescue of blocked DNA replication forks via replication fork reversal (RFR). RuvA specifically binds to HJ cruciform DNA, conferring on it an open structure. The RuvB hexamer acts as an ATP-dependent pump, pulling dsDNA into and through the RuvAB complex. HJ branch migration allows RuvC to scan DNA until it finds its consensus sequence, where it cleaves and resolves the cruciform DNA. The chain is Holliday junction branch migration complex subunit RuvA from Agrobacterium fabrum (strain C58 / ATCC 33970) (Agrobacterium tumefaciens (strain C58)).